The chain runs to 102 residues: Small ribosomal subunit protein uS10 (102 aa).

A disordered region spans residues Val34–Thr58.

Belongs to the universal ribosomal protein uS10 family. In terms of assembly, part of the 30S ribosomal subunit.

Its function is as follows. Involved in the binding of tRNA to the ribosomes. The chain is Small ribosomal subunit protein uS10 from Halobacterium salinarum (strain ATCC 29341 / DSM 671 / R1).